A 409-amino-acid chain; its full sequence is MDVVTRFAPSPTGNLHIGGLRTAIFNFLYARRHGGKFLLRIEDTDLARSNTAYLESILQALKWLSLSYDELVYQSVNVNRHREVALELLNRGKAYHDNGAVRLKVNHDETVKFSDLILGEISADGDSINDVVILRSDGSPTYMLAVVVDDHDMGITHIIRGSDHITNTFAQKLIYEGMGWSLPDFAHIPLIHNTHGAKLSKRDGAVDVIDYRTAGILPEAMFNYLLRLGWSHGDKEIFSIQEAIDLFDITAVGKSPARFDREKLYSLNSYYISGLPLERIASEVRSLVEEKIIVSYSAFIAFVELFRKKCSSIVELKDNLQFCWCTDSCLEVDRLLLQEVLKLLENTDWGPSLQQILKEYISLSGFSAKEVYTNLRMALIGQEHSPSVVEIMQIFGKDVVLKKLRNSLK.

The 'HIGH' region motif lies at 9-19 (PSPTGNLHIGG). The 'KMSKS' region signature appears at 198–202 (KLSKR). ATP is bound at residue K201.

Belongs to the class-I aminoacyl-tRNA synthetase family. Glutamate--tRNA ligase type 1 subfamily. Monomer.

It localises to the cytoplasm. The catalysed reaction is tRNA(Glu) + L-glutamate + ATP = L-glutamyl-tRNA(Glu) + AMP + diphosphate. Functionally, catalyzes the attachment of glutamate to tRNA(Glu) in a two-step reaction: glutamate is first activated by ATP to form Glu-AMP and then transferred to the acceptor end of tRNA(Glu). This is Glutamate--tRNA ligase 2 from Neorickettsia sennetsu (strain ATCC VR-367 / Miyayama) (Ehrlichia sennetsu).